A 457-amino-acid polypeptide reads, in one-letter code: MMSYEPAEPVPVEEQPILEKLIGIRQRLAVLKRDRTRFIEKNEVFHLKDELVEQMNLLDSRRSTNSTRTIVDSQLEDCLHLLSLFYLAIGRNNDLPAFFVQLGTVRRLLEYNLEGACYTQNDLKPLKERLERIRAAIVEGSKKEDASPVVVKYLNNKLAVCDRNYSEAQHNISKISPELIGIQTRLVSIHRQIDGFAVRPTSDPGFIDRTMEQLKEIEEMKDSNGMFCDADHVPLQGQELCNGILEECFSFLEDAKTKEGLSDEMKSSPKLQQIYHRLDELLNKLKHLTLTHRWTLRETDLYVYRASLAEIDSMRIDGQFLDEQGNAPAGQRILLYLLRRCYAYIYQLLSSSEPVSEELMAVHNQLRTVKRCLLEVQRSGGICSERDLYPYQMKLASLENLRVNGKFLASDHSVPEGQELVNSLLTQCHQLIEELRDEKHQHDIEEREGSENTDGNL.

Coiled-coil stretches lie at residues 119–174 and 418–448; these read TQND…NISK and QELV…EERE.

Belongs to the CUB1 family.

It localises to the cytoplasm. The protein localises to the nucleus. Involved in bleomycin tolerance with links to DNA repair and/or proteasome function. The protein is CUB1 family protein C30C2.08 of Schizosaccharomyces pombe (strain 972 / ATCC 24843) (Fission yeast).